The sequence spans 138 residues: Pleckstrin homology-like domain family A member 2 (138 aa).

The 95-residue stretch at 11 to 105 (VLKEGELEKR…WNAVITMALI (95 aa)) folds into the PH domain. The segment at 117-138 (KTRQDDESGSPGQHESRMARAP) is disordered.

The protein belongs to the PHLDA2 family.

It localises to the cytoplasm. Its subcellular location is the membrane. Functionally, plays a role in regulating placenta growth. May act via its PH domain that competes with other PH domain-containing proteins, thereby preventing their binding to membrane lipids. The sequence is that of Pleckstrin homology-like domain family A member 2 (phlda2) from Salmo salar (Atlantic salmon).